We begin with the raw amino-acid sequence, 827 residues long: Glycerol-3-phosphate acyltransferase (827 aa).

Residues 309–314 (CHRSHI) carry the HXXXXD motif motif.

Belongs to the GPAT/DAPAT family.

The protein resides in the cell inner membrane. The enzyme catalyses sn-glycerol 3-phosphate + an acyl-CoA = a 1-acyl-sn-glycero-3-phosphate + CoA. It functions in the pathway phospholipid metabolism; CDP-diacylglycerol biosynthesis; CDP-diacylglycerol from sn-glycerol 3-phosphate: step 1/3. The polypeptide is Glycerol-3-phosphate acyltransferase (Ectopseudomonas mendocina (strain ymp) (Pseudomonas mendocina)).